The sequence spans 435 residues: Divergent protein kinase domain 2B (435 aa).

The N-terminal stretch at 1 to 33 (MESQWRGAAATAFHQHWLARLLLWVSTLSCSFS) is a signal peptide. Residues N102 and N395 are each glycosylated (N-linked (GlcNAc...) asparagine).

Belongs to the DIPK family.

It localises to the secreted. This chain is Divergent protein kinase domain 2B (Dipk2b), found in Mus musculus (Mouse).